The chain runs to 341 residues: Ketol-acid reductoisomerase (NADP(+)) (341 aa).

Positions Met1–Thr182 constitute a KARI N-terminal Rossmann domain. Residues Tyr25–Gln28, Lys48, Ser51, Ser53, and Asp83–Gln86 each bind NADP(+). The active site involves His108. Position 134 (Gly134) interacts with NADP(+). The KARI C-terminal knotted domain maps to Thr183–Gln328. 4 residues coordinate Mg(2+): Asp191, Glu195, Glu227, and Glu231. Ser252 contacts substrate.

Belongs to the ketol-acid reductoisomerase family. Requires Mg(2+) as cofactor.

It catalyses the reaction (2R)-2,3-dihydroxy-3-methylbutanoate + NADP(+) = (2S)-2-acetolactate + NADPH + H(+). The enzyme catalyses (2R,3R)-2,3-dihydroxy-3-methylpentanoate + NADP(+) = (S)-2-ethyl-2-hydroxy-3-oxobutanoate + NADPH + H(+). It participates in amino-acid biosynthesis; L-isoleucine biosynthesis; L-isoleucine from 2-oxobutanoate: step 2/4. The protein operates within amino-acid biosynthesis; L-valine biosynthesis; L-valine from pyruvate: step 2/4. Involved in the biosynthesis of branched-chain amino acids (BCAA). Catalyzes an alkyl-migration followed by a ketol-acid reduction of (S)-2-acetolactate (S2AL) to yield (R)-2,3-dihydroxy-isovalerate. In the isomerase reaction, S2AL is rearranged via a Mg-dependent methyl migration to produce 3-hydroxy-3-methyl-2-ketobutyrate (HMKB). In the reductase reaction, this 2-ketoacid undergoes a metal-dependent reduction by NADPH to yield (R)-2,3-dihydroxy-isovalerate. The protein is Ketol-acid reductoisomerase (NADP(+)) of Arthrobacter sp. (strain FB24).